The following is a 1102-amino-acid chain: MEHEQDDPGTSTNVGVDSSVDDSMASLSICDSEHPNIYRQDIVKNKKTGSVGVVSEVAGDSDSDSDISDEEEDDDDDEDNDDDDEDVEEGKKASEENVVNGDGEKKADGNYKCGALEGDQIRVLWMDNTEPVQDINDVTVIDRGFLHGDYVASASEPTGQVGVVVDVNISVDLLAPDGSIHKDISTKNLKRVRDFAVGDYVVHGPWLGRIDDVLDNVTVLFDDGSMCKVLRVEPLRLKPIPKNNLEEDANFPYYPGQRVKASSSSVFKNSRWLSGLWKPNRLEGTVTKVTAGSIFVYWIASAGFGPDSSVSPPEEQNPSNLTLLSCFTHANWQVGDWCLLPSLNQSATIPLHKHVSKLRLYDSQADRQQKIGRDLEDVQDEVSGKVEPAGITAEALPKVTSDDPPQRNPSVSKEPVHEPWPLHRKKIRKLVIRKDKKVKKKEESFEQALLVVNSRTRVDVSWQDGTIECRREAITLIPIETPGDHEFVSEQYVVEKTSDDGDNTTEPRRAGVVKNVNAKDRTASVRWLNPLRRAEEPREFEKEEIVSVYELEGHPDYDYCYGDVVVRLSPIAVALPASSPGNSFEEATQQDNGYQDSESHQEAKILVDKEENEPSTDLSKLSWVGNITGLKDGDIEVTWADGTISTVGPHAVYVVGRDDDDESVAGESETSDAASWETLNDDDRGAPEIPEEDLGRSSSIEGNSDADIYAENDSGRNGALALPLAAIEFVTRLASGIFSRARKSVDSSSSDYTVENVYKQAESTNPSDETDSLDDPSPSKVNVTDNCESKGTQANAKNILSGETSTFLEDEDKPVPSEGDSCSFRRFDISQDPLDHHFLGVDGQKTKERQWFKKVDQDWKILQNNLPDGIFVRAYEDRMDLLRAVIVGAFGTPYQDGLFFFDFHLPSDYPSVPPSAYYHSGGWRLNPNLYEEGKVCLSLLNTWTGRGNEVWDPKSSSILQVLVSLQGLVLNSKPYFNEAGYDKQVGTAEGEKNSLGYNENTFLLNCKTMMYLMRKPPKDFEELIKDHFRKRGYYILKACDAYMKGYLIGSLTKDASVIDERSSANSTSVGFKLMLAKIAPKLFSALSEVGADCNEFQHLQQQ.

Disordered regions lie at residues 1-20, 25-111, 396-418, 579-602, 661-710, and 760-800; these read MEHE…DSSV, ASLS…DGNY, LPKV…PVHE, SPGN…SHQE, DESV…DIYA, and QAES…KNIL. Over residues 31–44 the composition is skewed to basic and acidic residues; sequence DSEHPNIYRQDIVK. Positions 59–88 are enriched in acidic residues; it reads GDSDSDSDISDEEEDDDDDEDNDDDDEDVE. Positions 579–596 are enriched in polar residues; it reads SPGNSFEEATQQDNGYQD. Positions 779 to 800 are enriched in polar residues; it reads SKVNVTDNCESKGTQANAKNIL. The 161-residue stretch at 850–1010 folds into the UBC core domain; it reads QWFKKVDQDW…TFLLNCKTMM (161 aa). Cysteine 936 (glycyl thioester intermediate) is an active-site residue.

It belongs to the ubiquitin-conjugating enzyme family.

It carries out the reaction S-ubiquitinyl-[E1 ubiquitin-activating enzyme]-L-cysteine + [E2 ubiquitin-conjugating enzyme]-L-cysteine = [E1 ubiquitin-activating enzyme]-L-cysteine + S-ubiquitinyl-[E2 ubiquitin-conjugating enzyme]-L-cysteine.. The protein operates within protein modification; protein ubiquitination. Its function is as follows. Accepts the ubiquitin from the E1 complex and catalyzes its covalent attachment to other proteins. This Arabidopsis thaliana (Mouse-ear cress) protein is Probable ubiquitin-conjugating enzyme E2 23 (UBC23).